The primary structure comprises 344 residues: Dihydroorotase (344 aa).

Residues histidine 14 and histidine 16 each coordinate Zn(2+). Substrate-binding positions include 16-18 and asparagine 42; that span reads HLR. Zn(2+) is bound by residues lysine 100, histidine 137, and histidine 175. At lysine 100 the chain carries N6-carboxylysine. Residue histidine 137 participates in substrate binding. Leucine 220 is a binding site for substrate. Aspartate 248 lines the Zn(2+) pocket. Aspartate 248 is an active-site residue. Substrate contacts are provided by histidine 252 and alanine 264.

The protein belongs to the metallo-dependent hydrolases superfamily. DHOase family. Class II DHOase subfamily. Homodimer. Zn(2+) serves as cofactor.

It carries out the reaction (S)-dihydroorotate + H2O = N-carbamoyl-L-aspartate + H(+). It functions in the pathway pyrimidine metabolism; UMP biosynthesis via de novo pathway; (S)-dihydroorotate from bicarbonate: step 3/3. Its function is as follows. Catalyzes the reversible cyclization of carbamoyl aspartate to dihydroorotate. The chain is Dihydroorotase from Cupriavidus pinatubonensis (strain JMP 134 / LMG 1197) (Cupriavidus necator (strain JMP 134)).